Consider the following 89-residue polypeptide: Small ribosomal subunit protein uS15 (89 aa).

The protein belongs to the universal ribosomal protein uS15 family. Part of the 30S ribosomal subunit. Forms a bridge to the 50S subunit in the 70S ribosome, contacting the 23S rRNA.

In terms of biological role, one of the primary rRNA binding proteins, it binds directly to 16S rRNA where it helps nucleate assembly of the platform of the 30S subunit by binding and bridging several RNA helices of the 16S rRNA. Functionally, forms an intersubunit bridge (bridge B4) with the 23S rRNA of the 50S subunit in the ribosome. The chain is Small ribosomal subunit protein uS15 from Jannaschia sp. (strain CCS1).